Consider the following 481-residue polypeptide: Protein FIZZY-RELATED 3 (481 aa).

The disordered stretch occupies residues P100–V165. Low complexity predominate over residues S125 to S136. Residues P154–H163 show a composition bias toward basic residues. 7 WD repeats span residues Q172–L209, G213–T252, G255–S292, G296–K335, E338–S380, D382–T423, and G426–T465.

The protein belongs to the WD repeat CDC20/Fizzy family. As to quaternary structure, associates with the APC/C complex. Interacts with CDC20-1, CDC20-2, CYCA1-1, CYCA3-4, CYCB1-1 and CYCB1-2. Binds to GIG1 and PYM.

It participates in protein modification; protein ubiquitination. Activator protein that regulates the ubiquitin ligase activity and substrate specificity of the anaphase promoting complex/cyclosome (APC/C). In Arabidopsis thaliana (Mouse-ear cress), this protein is Protein FIZZY-RELATED 3 (FZR3).